Here is a 216-residue protein sequence, read N- to C-terminus: Protein-L-isoaspartate O-methyltransferase (216 aa).

Residue S61 is part of the active site.

The protein belongs to the methyltransferase superfamily. L-isoaspartyl/D-aspartyl protein methyltransferase family.

It localises to the cytoplasm. The enzyme catalyses [protein]-L-isoaspartate + S-adenosyl-L-methionine = [protein]-L-isoaspartate alpha-methyl ester + S-adenosyl-L-homocysteine. In terms of biological role, catalyzes the methyl esterification of L-isoaspartyl residues in peptides and proteins that result from spontaneous decomposition of normal L-aspartyl and L-asparaginyl residues. It plays a role in the repair and/or degradation of damaged proteins. The protein is Protein-L-isoaspartate O-methyltransferase of Dinoroseobacter shibae (strain DSM 16493 / NCIMB 14021 / DFL 12).